A 436-amino-acid chain; its full sequence is T-box transcription factor TBX6 (436 aa).

The T-box DNA-binding region spans 100–273; that stretch reads LWKEFSAVGT…ANPFAKGFRE (174 aa). The span at 274–284 shows a compositional bias: basic and acidic residues; sequence NGRNCKRERDA. Disordered stretches follow at residues 274–344 and 360–383; these read NGRN…CGGP and PSHL…APYS. The segment covering 332–344 has biased composition (low complexity); it reads EAASASAPPCGGP.

The protein localises to the nucleus. T-box transcription factor that plays an essential role in the determination of the fate of axial stem cells: neural vs mesodermal. Acts in part by down-regulating, a specific enhancer (N1) of SOX2, to inhibit neural development. Seems to play also an essential role in left/right axis determination and acts through effects on Notch signaling around the node as well as through an effect on the morphology and motility of the nodal cilia. The sequence is that of T-box transcription factor TBX6 (Tbx6) from Mus musculus (Mouse).